Reading from the N-terminus, the 292-residue chain is Cbb3-type cytochrome c oxidase subunit CcoP (292 aa).

Transmembrane regions (helical) follow at residues 11-31 (FGLI…SSLI) and 62-82 (VGWI…FFFG). 2 Cytochrome c domains span residues 116–195 (ELVD…MAEI) and 205–288 (QLID…QSLK). 8 residues coordinate heme c: cysteine 129, cysteine 132, histidine 133, methionine 174, cysteine 219, cysteine 222, histidine 223, and methionine 264.

This sequence belongs to the CcoP / FixP family. As to quaternary structure, component of the cbb3-type cytochrome c oxidase at least composed of CcoN, CcoO, CcoQ and CcoP. The cofactor is heme c.

It localises to the cell inner membrane. Its pathway is energy metabolism; oxidative phosphorylation. Functionally, C-type cytochrome. Part of the cbb3-type cytochrome c oxidase complex. CcoP subunit is required for transferring electrons from donor cytochrome c via its heme groups to CcoO subunit. From there, electrons are shuttled to the catalytic binuclear center of CcoN subunit where oxygen reduction takes place. The complex also functions as a proton pump. The polypeptide is Cbb3-type cytochrome c oxidase subunit CcoP (Helicobacter pylori (strain 52)).